A 1250-amino-acid polypeptide reads, in one-letter code: Protein SSD1 (1250 aa).

Residues 1-22 (MSKNSNVNNNRSQEPNNMFVQT) are compositionally biased toward polar residues. The interval 1-32 (MSKNSNVNNNRSQEPNNMFVQTTGGGKNAPKQ) is disordered. At serine 2 the chain carries N-acetylserine. Serine 40 carries the phosphoserine modification. Positions 79–163 (TGQYLSGNSG…SSIYGHSRRH (85 aa)) are disordered. The segment covering 84 to 94 (SGNSGSNNHFT) has biased composition (polar residues). A compositionally biased stretch (low complexity) spans 124-145 (NNSGYYHNSYDNNNNSNNPGSN). Residues serine 164 and serine 183 each carry the phosphoserine modification. Residues 197–208 (QADSGSNSTTEQ) are compositionally biased toward polar residues. 3 disordered regions span residues 197-338 (QADS…GGRK), 418-443 (KEKE…SSDD), and 455-517 (SNNF…DDVE). Threonine 227 carries the phosphothreonine modification. Over residues 264-276 (NEYSPGINSNWRN) the composition is skewed to polar residues. Low complexity predominate over residues 277–287 (QSQQPQQQLSP). Phosphoserine occurs at positions 286 and 322. Residues 319-329 (SNSSVHSFSSQ) are compositionally biased toward polar residues. Positions 481 to 495 (STINNDSDSLSSPTK) are enriched in polar residues. 2 positions are modified to phosphoserine: serine 491 and serine 492. A compositionally biased stretch (basic residues) spans 497–510 (GVRRRSSLKQRPTQ). Residues 582-657 (AWFKPTDKKV…EIDSILRDNN (76 aa)) form the CSD2 domain. Tyrosine 688 bears the Phosphotyrosine mark. An RNB domain is found at 694–1015 (DTNEYNIFAI…VHRQLKAVIH (322 aa)). The DIS3L2 C-terminal domain maps to 1064-1148 (GQLLTMATVL…SIKNKFRSTA (85 aa)).

Belongs to the RNR ribonuclease family.

In terms of biological role, can suppress the lethality due to deletion of SIT4, and partially the defects due to BCY1 disruption. Is implicated in the control of the cell cycle G1 phase. The sequence is that of Protein SSD1 (SSD1) from Saccharomyces cerevisiae (strain ATCC 204508 / S288c) (Baker's yeast).